The sequence spans 358 residues: UPF0324 membrane protein CT0845 (358 aa).

The next 10 helical transmembrane spans lie at 36 to 53 (YFPG…ATFL), 57 to 76 (YGAP…RFLS), 83 to 105 (LVGI…GMRI), 115 to 134 (VKPV…FGLA), 146 to 168 (GVLT…AAVL), 178 to 200 (TIFT…PVVA), 244 to 261 (LLRV…SLIF), 276 to 295 (LLPP…SLGV), 307 to 325 (VSRW…KTSL), and 335 to 357 (PVSI…VVWM).

Belongs to the UPF0324 family.

The protein localises to the cell membrane. The polypeptide is UPF0324 membrane protein CT0845 (Chlorobaculum tepidum (strain ATCC 49652 / DSM 12025 / NBRC 103806 / TLS) (Chlorobium tepidum)).